The chain runs to 199 residues: Holliday junction resolvase RecU (199 aa).

The Mg(2+) site is built by Thr-82, Asp-84, Glu-97, and Gln-116.

It belongs to the RecU family. Mg(2+) is required as a cofactor.

The protein localises to the cytoplasm. It catalyses the reaction Endonucleolytic cleavage at a junction such as a reciprocal single-stranded crossover between two homologous DNA duplexes (Holliday junction).. Endonuclease that resolves Holliday junction intermediates in genetic recombination. Cleaves mobile four-strand junctions by introducing symmetrical nicks in paired strands. Promotes annealing of linear ssDNA with homologous dsDNA. Required for DNA repair, homologous recombination and chromosome segregation. The protein is Holliday junction resolvase RecU of Streptococcus pyogenes serotype M1.